Reading from the N-terminus, the 479-residue chain is FAD-dependent monooxygenase atmM (479 aa).

A helical membrane pass occupies residues 10–30; the sequence is IIVGGSVAGLTLAHCLQRAGI. FAD-binding residues include E36, G50, R109, D309, and A322. Residues 445–465 form a helical membrane-spanning segment; it reads WILVLLVIVVSFGLHSPELVI.

It belongs to the paxM FAD-dependent monooxygenase family. The cofactor is FAD.

The protein localises to the membrane. It participates in secondary metabolite biosynthesis. Its function is as follows. FAD-dependent monooxygenase; part of the ATM1 gene cluster that mediates the biosynthesis of aflatrem, a tremorgenic mycotoxin with acute neurotoxic effects. Synthesis of geranylgeranyl diphosphate (GGPP) by AtmG (a GGPP synthase) precedes condensation of GGPP with indole 3-glycerol phosphate, followed by epoxidation and cyclization by AtmM (a FAD-dependent monooxygenase) and AtmC (a prenyltransferase) to produce paspaline. AtmB is also essential for paspaline production, but its exact role has not been identified yet. AtmP, a cytochrome P450 monooxygenase, subsequently converts paspaline to 13-desoxypaxilline via PC-M6 by removal of the C-30 methyl group and oxidation at C-10. AtmQ, a cytochrome P450 monooxygenase, then catalyzes the oxidation of 13-desoxypaxilline, first at C-7 to produce paspalicine and then at C-13 to form paspalinine. Finally, AtmD prenylates paspalinine to form aflatrem. In Aspergillus flavus, this protein is FAD-dependent monooxygenase atmM.